A 557-amino-acid chain; its full sequence is NAD(P)H-quinone oxidoreductase chain 4 (557 aa).

A run of 14 helical transmembrane segments spans residues 25–45 (FPWL…VPFI), 57–77 (YALF…LKGF), 111–131 (LILL…PVSF), 133–153 (PKLF…VFAV), 157–177 (LLFF…LAIW), 189–209 (FIIY…AMGF), 230–250 (GFQL…LPIV), 264–284 (TAPV…YALL), 298–318 (FAPL…LTSF), 327–347 (IAYS…SFST), 353–373 (AMLQ…LVGA), 397–417 (FALW…SGFV), 438–458 (IVIA…LLSM), and 485–505 (IYII…PRIM).

It belongs to the complex I subunit 4 family.

The protein localises to the cellular thylakoid membrane. It carries out the reaction a plastoquinone + NADH + (n+1) H(+)(in) = a plastoquinol + NAD(+) + n H(+)(out). The enzyme catalyses a plastoquinone + NADPH + (n+1) H(+)(in) = a plastoquinol + NADP(+) + n H(+)(out). Functionally, NDH-1 shuttles electrons from NAD(P)H, via FMN and iron-sulfur (Fe-S) centers, to quinones in the respiratory chain. The immediate electron acceptor for the enzyme in this species is believed to be plastoquinone. Couples the redox reaction to proton translocation (for every two electrons transferred, four hydrogen ions are translocated across the cytoplasmic membrane), and thus conserves the redox energy in a proton gradient. The chain is NAD(P)H-quinone oxidoreductase chain 4 from Prochlorococcus marinus (strain SARG / CCMP1375 / SS120).